We begin with the raw amino-acid sequence, 82 residues long: ATP synthase subunit c, chloroplastic (82 aa).

The next 2 membrane-spanning stretches (helical) occupy residues 7–27 and 57–77; these read AASV…PGIG and LAFM…LLFA.

Belongs to the ATPase C chain family. In terms of assembly, F-type ATPases have 2 components, F(1) - the catalytic core - and F(0) - the membrane proton channel. F(1) has five subunits: alpha(3), beta(3), gamma(1), delta(1), epsilon(1). F(0) has four main subunits: a(1), b(1), b'(1) and c(10-14). The alpha and beta chains form an alternating ring which encloses part of the gamma chain. F(1) is attached to F(0) by a central stalk formed by the gamma and epsilon chains, while a peripheral stalk is formed by the delta, b and b' chains.

It is found in the plastid. The protein resides in the chloroplast thylakoid membrane. In terms of biological role, f(1)F(0) ATP synthase produces ATP from ADP in the presence of a proton or sodium gradient. F-type ATPases consist of two structural domains, F(1) containing the extramembraneous catalytic core and F(0) containing the membrane proton channel, linked together by a central stalk and a peripheral stalk. During catalysis, ATP synthesis in the catalytic domain of F(1) is coupled via a rotary mechanism of the central stalk subunits to proton translocation. Its function is as follows. Key component of the F(0) channel; it plays a direct role in translocation across the membrane. A homomeric c-ring of between 10-14 subunits forms the central stalk rotor element with the F(1) delta and epsilon subunits. This is ATP synthase subunit c, chloroplastic from Guillardia theta (Cryptophyte).